Here is a 707-residue protein sequence, read N- to C-terminus: Serine/threonine protein kinase UL97 (707 aa).

The segment covering M1–L14 has biased composition (low complexity). Disordered regions lie at residues M1–A32, D113–H147, F176–P199, and E231–S264. The segment covering D113–R127 has biased composition (basic and acidic residues). Low complexity predominate over residues G178–G188. Residue D456 is the Proton acceptor of the active site.

Belongs to the protein kinase superfamily. Tyr protein kinase family. HCMV ganciclovir subfamily. In terms of assembly, interacts with UL83. Post-translationally, autophosphorylates on serine and threonine residues.

The protein localises to the virion. It carries out the reaction L-seryl-[protein] + ATP = O-phospho-L-seryl-[protein] + ADP + H(+). The catalysed reaction is L-threonyl-[protein] + ATP = O-phospho-L-threonyl-[protein] + ADP + H(+). Its function is as follows. Serine/threonine protein kinase that plays important roles in several processes including nuclear viral egress, viral replication or regulation of host cell cycle progression. Participates in the acquisition of tegument during virion morphogenesis in the nucleus. Redistributes the host nuclear lamina by phosphorylating cellular Lamins-A/C. Plays a role in viral DNA synthesis by phosphorylating the DNA polymerase processivity factor UL44. Stimulates host cell cycle to support viral DNA synthesis by phosphorylating host retinoblastoma/RB1 protein. Additional substrates have been identified including host EF1D or H2B. Also phosphorylates host SAMHD1 and thereby counteracts its antiviral effect by reducing its dNTP hydrolase activity. This is Serine/threonine protein kinase UL97 (UL97) from Homo sapiens (Human).